Consider the following 1047-residue polypeptide: Ras GTPase-activating protein 1 (1047 aa).

The residue at position 1 (M1) is an N-acetylmethionine. Residues 181–272 (WYHGKLDRTI…LKGEKLLYPV (92 aa)) form the SH2 1 domain. Residues 279–341 (EDRRRVRAIL…VEDLVEEVGR (63 aa)) form the SH3 domain. Residues 351 to 441 (WFHGKISKQE…VEGYYLKEPV (91 aa)) enclose the SH2 2 domain. Residues 474 to 577 (NIVKKGYLLK…WMKGLQAFCN (104 aa)) form the PH domain. The C2 domain occupies 577 to 690 (NLRKSSPGTS…QKGHATDEWF (114 aa)). Y615 bears the Phosphotyrosine mark. A Ras-GAP domain is found at 764 to 974 (KLESLLLCTL…HRMIMFLDEL (211 aa)). Phosphoserine is present on S831.

As to quaternary structure, interacts with SQSTM1. Interacts with SPSB1; the interaction does not promote degradation. Interacts with CAV2 (tyrosine phosphorylated form). Directly interacts with NCK1. Interacts with PDGFRB (tyrosine phosphorylated). Interacts (via SH2 domain) with the 'Tyr-9' phosphorylated form of PDPK1. Interacts with tyrosine-phosphorylated EPHB4. Post-translationally, the N-terminus is blocked. Phosphorylated by SRC and LCK. The phosphorylation SRC inhibits its ability to stimulate the Ras-GTPase activity, whereas phosphorylation by LCK does not display any effect on stimulation activity. In placental villi, detected only in the trophoblast layer (cytotrophoblast and syncytiotrophoblast). Not detected in stromal, endothelial or Hofbauer cells (at protein level).

It is found in the cytoplasm. In terms of biological role, inhibitory regulator of the Ras-cyclic AMP pathway. Stimulates the GTPase of normal but not oncogenic Ras p21; this stimulation may be further increased in the presence of NCK1. The chain is Ras GTPase-activating protein 1 (RASA1) from Homo sapiens (Human).